The sequence spans 207 residues: Guanylate kinase (207 aa).

Residues 7 to 185 (GIVLVLCAPS…AYDELRAAYI (179 aa)) form the Guanylate kinase-like domain. Position 14–21 (14–21 (APSGTGKT)) interacts with ATP.

The protein belongs to the guanylate kinase family.

It localises to the cytoplasm. The enzyme catalyses GMP + ATP = GDP + ADP. Essential for recycling GMP and indirectly, cGMP. The chain is Guanylate kinase from Nitratidesulfovibrio vulgaris (strain ATCC 29579 / DSM 644 / CCUG 34227 / NCIMB 8303 / VKM B-1760 / Hildenborough) (Desulfovibrio vulgaris).